Consider the following 67-residue polypeptide: Large ribosomal subunit protein bL35 (67 aa).

The protein belongs to the bacterial ribosomal protein bL35 family.

The sequence is that of Large ribosomal subunit protein bL35 from Methylorubrum populi (strain ATCC BAA-705 / NCIMB 13946 / BJ001) (Methylobacterium populi).